Reading from the N-terminus, the 435-residue chain is Glutamyl-tRNA reductase (435 aa).

Substrate contacts are provided by residues 49-52 (TCNR), Ser114, 119-121 (EPQ), and Gln125. Catalysis depends on Cys50, which acts as the Nucleophile. An NADP(+)-binding site is contributed by 204-209 (GAGETI).

This sequence belongs to the glutamyl-tRNA reductase family. Homodimer.

It catalyses the reaction (S)-4-amino-5-oxopentanoate + tRNA(Glu) + NADP(+) = L-glutamyl-tRNA(Glu) + NADPH + H(+). The protein operates within porphyrin-containing compound metabolism; protoporphyrin-IX biosynthesis; 5-aminolevulinate from L-glutamyl-tRNA(Glu): step 1/2. In terms of biological role, catalyzes the NADPH-dependent reduction of glutamyl-tRNA(Glu) to glutamate 1-semialdehyde (GSA). This chain is Glutamyl-tRNA reductase, found in Actinobacillus succinogenes (strain ATCC 55618 / DSM 22257 / CCUG 43843 / 130Z).